The chain runs to 177 residues: von Ebner gland protein 1 (177 aa).

The N-terminal stretch at 1–18 is a signal peptide; that stretch reads MKALLLTFGLSLLAALQA. A disulfide bond links cysteine 80 and cysteine 172.

It belongs to the calycin superfamily. Lipocalin family. As to quaternary structure, homodimer.

The protein localises to the secreted. Could play a role in taste reception. Could be necessary for the concentration and delivery of sapid molecules in the gustatory system. The sequence is that of von Ebner gland protein 1 (Vegp1) from Rattus norvegicus (Rat).